The sequence spans 244 residues: tRNA pseudouridine synthase A 2 (244 aa).

Asp-52 acts as the Nucleophile in catalysis. Tyr-110 provides a ligand contact to substrate.

Belongs to the tRNA pseudouridine synthase TruA family. In terms of assembly, homodimer.

It catalyses the reaction uridine(38/39/40) in tRNA = pseudouridine(38/39/40) in tRNA. Functionally, formation of pseudouridine at positions 38, 39 and 40 in the anticodon stem and loop of transfer RNAs. This Clostridium perfringens (strain 13 / Type A) protein is tRNA pseudouridine synthase A 2.